A 232-amino-acid chain; its full sequence is tRNA (guanine-N(1)-)-methyltransferase (232 aa).

S-adenosyl-L-methionine contacts are provided by residues G112 and I132–L137.

Belongs to the RNA methyltransferase TrmD family. In terms of assembly, homodimer.

It localises to the cytoplasm. It carries out the reaction guanosine(37) in tRNA + S-adenosyl-L-methionine = N(1)-methylguanosine(37) in tRNA + S-adenosyl-L-homocysteine + H(+). Its function is as follows. Specifically methylates guanosine-37 in various tRNAs. This Anaplasma phagocytophilum (strain HZ) protein is tRNA (guanine-N(1)-)-methyltransferase.